The chain runs to 483 residues: tRNA (guanine(37)-N(1))-methyltransferase (483 aa).

The disordered stretch occupies residues 1 to 24; sequence MEEAATLQSLSISSSSPFPNNSSP. Residues 9-24 show a composition bias toward low complexity; the sequence is SLSISSSSPFPNNSSP. S-adenosyl-L-methionine is bound by residues His-252, 290-291, and Asn-379; that span reads DL.

This sequence belongs to the class I-like SAM-binding methyltransferase superfamily. TRM5/TYW2 family. Monomer.

The protein resides in the mitochondrion matrix. It is found in the nucleus. The protein localises to the cytoplasm. The catalysed reaction is guanosine(37) in tRNA + S-adenosyl-L-methionine = N(1)-methylguanosine(37) in tRNA + S-adenosyl-L-homocysteine + H(+). Its function is as follows. Specifically methylates the N1 position of guanosine-37 in various cytoplasmic and mitochondrial tRNAs. Methylation is not dependent on the nature of the nucleoside 5' of the target nucleoside. This is the first step in the biosynthesis of wybutosine (yW), a modified base adjacent to the anticodon of tRNAs and required for accurate decoding. This is tRNA (guanine(37)-N(1))-methyltransferase from Ajellomyces capsulatus (strain G186AR / H82 / ATCC MYA-2454 / RMSCC 2432) (Darling's disease fungus).